The chain runs to 991 residues: Integrator complex subunit 10-like protein (991 aa).

5 disordered regions span residues 180–217 (NNNN…NNNN), 310–345 (YFDE…DIEK), 462–484 (NDYF…SQES), 549–614 (NSSS…GQQP), and 961–991 (EKQY…EMNE). Over residues 319-333 (KQQQQQQQQQQQQEQ) the composition is skewed to low complexity. Over residues 473–484 (GGDENDENSQES) the composition is skewed to acidic residues. Positions 549–609 (NSSSGSNGII…NNNNNNNNNN (61 aa)) are enriched in low complexity. Residues 964-991 (YSSSNTANNSGVNNSPIHNQNTDVEMNE) are compositionally biased toward polar residues.

It is found in the nucleus. In terms of biological role, may be a component of the Integrator complex, a complex involved in the small nuclear RNAs (snRNA) U1 and U2 transcription and in their 3'-box-dependent processing. In Dictyostelium discoideum (Social amoeba), this protein is Integrator complex subunit 10-like protein.